The primary structure comprises 219 residues: Ribosomal RNA small subunit methyltransferase G (219 aa).

S-adenosyl-L-methionine-binding positions include glycine 85, leucine 90, 136–137 (VE), and arginine 151.

It belongs to the methyltransferase superfamily. RNA methyltransferase RsmG family.

The protein localises to the cytoplasm. It carries out the reaction guanosine(527) in 16S rRNA + S-adenosyl-L-methionine = N(7)-methylguanosine(527) in 16S rRNA + S-adenosyl-L-homocysteine. Its function is as follows. Specifically methylates the N7 position of guanine in position 527 of 16S rRNA. The chain is Ribosomal RNA small subunit methyltransferase G from Cellvibrio japonicus (strain Ueda107) (Pseudomonas fluorescens subsp. cellulosa).